A 323-amino-acid polypeptide reads, in one-letter code: Estradiol 17 beta-dehydrogenase 5 (323 aa).

NADP(+) contacts are provided by residues 20-24 (GFGTY) and aspartate 50. Catalysis depends on tyrosine 55, which acts as the Proton donor. Substrate is bound at residue histidine 117. Residues 166-167 (SN), glutamine 190, 216-221 (YSALGS), and 270-280 (KSFSEKRIKEN) contribute to the NADP(+) site.

It belongs to the aldo/keto reductase family. As to quaternary structure, monomer. Three forms are detected, probably due to post-translational modifications. In terms of tissue distribution, mainly found in liver. Also expressed weakly in kidney.

In terms of biological role, active toward androgens, estrogens, and xenobiotic substrates. Also exhibits low 20 alpha-HSD activity. Shows a-stereospecificity in hydrogen transfer between cofactors and substrates (A-specific). Preferentially catalyzes the reduction of 4-androstenedione, 5-alpha-androstane-3,17-dione, androsterone and dehydroepiandrosterone to testosterone, dihydrotestosterone, 5-alpha-androstane-3-alpha,17-beta-diol and 5-androstene-3-beta,17-beta-diol, respectively. In Mus musculus (Mouse), this protein is Estradiol 17 beta-dehydrogenase 5 (Akr1c6).